Reading from the N-terminus, the 429-residue chain is Enolase (429 aa).

A (2R)-2-phosphoglycerate-binding site is contributed by Gln-167. Glu-209 acts as the Proton donor in catalysis. Positions 246, 289, and 316 each coordinate Mg(2+). Lys-341, Arg-370, Ser-371, and Lys-392 together coordinate (2R)-2-phosphoglycerate. Lys-341 functions as the Proton acceptor in the catalytic mechanism.

This sequence belongs to the enolase family. Component of the RNA degradosome, a multiprotein complex involved in RNA processing and mRNA degradation. It depends on Mg(2+) as a cofactor.

Its subcellular location is the cytoplasm. The protein localises to the secreted. The protein resides in the cell surface. It carries out the reaction (2R)-2-phosphoglycerate = phosphoenolpyruvate + H2O. The protein operates within carbohydrate degradation; glycolysis; pyruvate from D-glyceraldehyde 3-phosphate: step 4/5. Its function is as follows. Catalyzes the reversible conversion of 2-phosphoglycerate (2-PG) into phosphoenolpyruvate (PEP). It is essential for the degradation of carbohydrates via glycolysis. This Pseudomonas fluorescens (strain ATCC BAA-477 / NRRL B-23932 / Pf-5) protein is Enolase.